Reading from the N-terminus, the 457-residue chain is Multidrug resistance protein MdtK (457 aa).

Helical transmembrane passes span 11 to 31 (LLALAIPVILAQVAQTAMGFV), 53 to 73 (IWLPAILFGHGLLLALTPVIA), 93 to 113 (WLAGFVSVLVMIVLWNAGYII), 127 to 147 (AVGYLRALLWGAPGYLFFQVA), 160 to 180 (GMVMGFLGLLVNIPVNYIFIY), 188 to 208 (LGGIGCGVATAAVYWVMFIAM), 243 to 263 (LPIALALFFEVTLFAVVALLV), 276 to 296 (IALNFSSLMFVLPMSLAAAVT), 314 to 334 (AARTGLGVGICMAVVTAIFTV), 350 to 370 (VVALAAQLMLLAAVYQISDSI), 387 to 407 (IFFITFTAYWVLGLPSGYILA), and 418 to 438 (PAGFWMGFIIGLTSAAVLMML).

This sequence belongs to the multi antimicrobial extrusion (MATE) (TC 2.A.66.1) family. MdtK subfamily.

The protein localises to the cell inner membrane. Its function is as follows. Multidrug efflux pump that functions probably as a Na(+)/drug antiporter. The chain is Multidrug resistance protein MdtK from Salmonella agona (strain SL483).